We begin with the raw amino-acid sequence, 402 residues long: Transcription regulatory protein OpdE (402 aa).

Helical transmembrane passes span 22 to 42 (VLAI…PVSL), 60 to 80 (GIAI…SVAG), 86 to 106 (TLLL…ALAP), 108 to 128 (YFVY…FWSM), 147 to 167 (ALVN…GAWL), 170 to 190 (LIGW…ALAW), 220 to 240 (PGVM…FSLF), 256 to 276 (AHVS…TLLI), 296 to 316 (ALIA…VVLL), 318 to 338 (LWGL…ARVF), 348 to 368 (LFVA…GLLF), and 375 to 395 (ATFF…ILTA).

This sequence to B.subtilis YwfA.

It localises to the cell membrane. Regulates the expression of oprD which encodes the imipenem-specific porin. In Pseudomonas aeruginosa (strain ATCC 15692 / DSM 22644 / CIP 104116 / JCM 14847 / LMG 12228 / 1C / PRS 101 / PAO1), this protein is Transcription regulatory protein OpdE (opdE).